A 968-amino-acid chain; its full sequence is RNA polymerase-associated protein RapA (968 aa).

The region spanning 164–334 (DVGRRHAPRV…FARLRLLDPN (171 aa)) is the Helicase ATP-binding domain. 177–184 (DEVGLGKT) is an ATP binding site. Residues 280-283 (DEAH) carry the DEAH box motif. One can recognise a Helicase C-terminal domain in the interval 490 to 662 (RVEWLMGYLT…YLASPDQTEG (173 aa)).

It belongs to the SNF2/RAD54 helicase family. RapA subfamily. Interacts with the RNAP. Has a higher affinity for the core RNAP than for the holoenzyme. Its ATPase activity is stimulated by binding to RNAP.

In terms of biological role, transcription regulator that activates transcription by stimulating RNA polymerase (RNAP) recycling in case of stress conditions such as supercoiled DNA or high salt concentrations. Probably acts by releasing the RNAP, when it is trapped or immobilized on tightly supercoiled DNA. Does not activate transcription on linear DNA. Probably not involved in DNA repair. This Escherichia coli O139:H28 (strain E24377A / ETEC) protein is RNA polymerase-associated protein RapA.